The sequence spans 594 residues: Arginine--tRNA ligase (594 aa).

A 'HIGH' region motif is present at residues 133–143 (ANPTGPMNIVS).

The protein belongs to the class-I aminoacyl-tRNA synthetase family. In terms of assembly, monomer.

It localises to the cytoplasm. The enzyme catalyses tRNA(Arg) + L-arginine + ATP = L-arginyl-tRNA(Arg) + AMP + diphosphate. This is Arginine--tRNA ligase from Leptospira biflexa serovar Patoc (strain Patoc 1 / Ames).